We begin with the raw amino-acid sequence, 320 residues long: Taste receptor type 2 member 109 (320 aa).

Residues 1–14 lie on the Extracellular side of the membrane; the sequence is MEHFLKSIFDISKN. The helical transmembrane segment at 15 to 35 threads the bilayer; sequence VLPIILFIELIIGIIGNGFMA. The Cytoplasmic segment spans residues 36–62; the sequence is LVHCMDWVKRKKMSLVNQILTTLATSR. The chain crosses the membrane as a helical span at residues 63 to 83; the sequence is ICLLWFMLLGLLITLLDPDLA. Residues 84 to 94 lie on the Extracellular side of the membrane; the sequence is SARMMIQVASN. The helical transmembrane segment at 95 to 115 threads the bilayer; sequence LWIIANHMSIWLATCLTVFYF. At 116 to 135 the chain is on the cytoplasmic side; it reads LKIANFSSSLFLYLKWRVEK. Residues 136–156 traverse the membrane as a helical segment; the sequence is VISVIFLVSLVLLFLNMLLMN. The Extracellular segment spans residues 157–191; that stretch reads LENDMCIAEYHQINISYSFIYHYRADCERRVLRLH. Asn-170 carries an N-linked (GlcNAc...) asparagine glycan. A helical membrane pass occupies residues 192 to 212; sequence IIILSVPFVLSLPTFLLLIFS. The Cytoplasmic portion of the chain corresponds to 213–240; sequence LWTHHKKMQQHVQGRRDASTTAHFKALQ. Residues 241–261 traverse the membrane as a helical segment; it reads TVIAFLLLYCIFILSMLLQFW. The Extracellular portion of the chain corresponds to 262–270; the sequence is KYELMKKPL. Residues 271–291 form a helical membrane-spanning segment; sequence FILFCHIVYGAFPSFHSYVLI. Residues 292–320 are Cytoplasmic-facing; that stretch reads LGDMKLRQASLSVLLWLKCRPNYIETLDL.

It belongs to the G-protein coupled receptor T2R family.

It localises to the membrane. Its function is as follows. Putative taste receptor which may play a role in the perception of bitterness. This chain is Taste receptor type 2 member 109, found in Rattus norvegicus (Rat).